Consider the following 543-residue polypeptide: Chaperonin GroEL 1 (543 aa).

ATP-binding positions include 30–33 (TLGP), Lys51, 87–91 (DGTTT), Gly415, and Asp496.

Belongs to the chaperonin (HSP60) family. As to quaternary structure, forms a cylinder of 14 subunits composed of two heptameric rings stacked back-to-back. Interacts with the co-chaperonin GroES.

It localises to the cytoplasm. It catalyses the reaction ATP + H2O + a folded polypeptide = ADP + phosphate + an unfolded polypeptide.. Its function is as follows. Together with its co-chaperonin GroES, plays an essential role in assisting protein folding. The GroEL-GroES system forms a nano-cage that allows encapsulation of the non-native substrate proteins and provides a physical environment optimized to promote and accelerate protein folding. The chain is Chaperonin GroEL 1 from Roseobacter denitrificans (strain ATCC 33942 / OCh 114) (Erythrobacter sp. (strain OCh 114)).